The following is a 393-amino-acid chain: Sulfate adenylyltransferase (393 aa).

It belongs to the sulfate adenylyltransferase family.

It catalyses the reaction sulfate + ATP + H(+) = adenosine 5'-phosphosulfate + diphosphate. The protein operates within sulfur metabolism; hydrogen sulfide biosynthesis; sulfite from sulfate: step 1/3. This is Sulfate adenylyltransferase from Synechococcus sp. (strain JA-3-3Ab) (Cyanobacteria bacterium Yellowstone A-Prime).